Here is a 163-residue protein sequence, read N- to C-terminus: MLQLCDSECDGLSSLMECGGAVNSPGDTLGQSPAHLAACGGQAFFLLWQLQTGVDVNQQDCFGEAPIHKAARSGSMECLSLLIASDARIDMCNKDGHTAEDVALSCGFLDCARYLATIKLTQDTFSRAQSSLHNLKETAAGVKRGQCCQSISHGKRRRSDGFV.

3 ANK repeats span residues 29-58, 62-91, and 95-124; these read LGQS…DVNQ, FGEA…RIDM, and DGHT…TQDT. The short motif at 129–149 is the Nuclear localization signal element; sequence QSSLHNLKETAAGVKRGQCCQ.

The protein resides in the nucleus. Its subcellular location is the cytoplasm. The protein is Ankyrin repeat domain-containing protein 37 (ankrd37) of Xenopus tropicalis (Western clawed frog).